Consider the following 279-residue polypeptide: Putative pyruvate, phosphate dikinase regulatory protein (279 aa).

Gly156 to Thr163 provides a ligand contact to ADP.

This sequence belongs to the pyruvate, phosphate/water dikinase regulatory protein family. PDRP subfamily.

The catalysed reaction is N(tele)-phospho-L-histidyl/L-threonyl-[pyruvate, phosphate dikinase] + ADP = N(tele)-phospho-L-histidyl/O-phospho-L-threonyl-[pyruvate, phosphate dikinase] + AMP + H(+). It carries out the reaction N(tele)-phospho-L-histidyl/O-phospho-L-threonyl-[pyruvate, phosphate dikinase] + phosphate + H(+) = N(tele)-phospho-L-histidyl/L-threonyl-[pyruvate, phosphate dikinase] + diphosphate. Its function is as follows. Bifunctional serine/threonine kinase and phosphorylase involved in the regulation of the pyruvate, phosphate dikinase (PPDK) by catalyzing its phosphorylation/dephosphorylation. The chain is Putative pyruvate, phosphate dikinase regulatory protein from Maricaulis maris (strain MCS10) (Caulobacter maris).